Reading from the N-terminus, the 469-residue chain is Beta-1,3-xylanase (469 aa).

The N-terminal stretch at 1–22 (MKKLAKMISIATLGACAFSAHA) is a signal peptide. One can recognise a GH26 domain in the interval 23-293 (LDGKLVPNEG…LKGFTYINAD (271 aa)). E138 acts as the Proton donor in catalysis. The active-site Nucleophile is E234. A compositionally biased stretch (gly residues) spans 352–374 (DNGGDNGGDNGGDNGGDNGGDNG). Residues 352–380 (DNGGDNGGDNGGDNGGDNGGDNGGTEPPE) are disordered. Positions 377-469 (EPPENCQDDF…NITFTTQVCN (93 aa)) are carbohydrate binding module (CBM). 2 cysteine pairs are disulfide-bonded: C382–C468 and C413–C418.

It belongs to the glycosyl hydrolase 26 family.

The catalysed reaction is Random hydrolysis of (1-&gt;3)-beta-D-glycosidic linkages in (1-&gt;3)-beta-D-xylans.. Its activity is regulated as follows. Completely inhibited by CuCl(2), FeCl(3), HgCl(2) and N-bromosuccinimide. Moderately inhibited by AgCl, AlCl(3), Pb(CH(3)COO)(2) and dithiothreitol. BaCl(2), CaCl(2), KCl, MgCl(2), MnCl(2), NaCl, ZnCl(2), ethylenediaminetetraacetic acid, N-ethylmaleimide, iodoacetic acid and p-chloromercuribenzoic acid have little or no effect on activity. In terms of biological role, catalyzes the hydrolysis of beta-1,3-xylan into oligosaccharides, mainly xylotriose and xylobiose with smaller amounts of xylotetraose, xylose, xylopentaose and xylohexaose. Does not hydrolyze xylobiose, p-nitrophenyl-beta-xyloside, beta-1,4-xylan, carboxymethylcellulose, curdlan, glucomannan or beta-1,4-mannan. The chain is Beta-1,3-xylanase from Alcaligenes sp.